A 117-amino-acid chain; its full sequence is uncharacterized protein (117 aa).

The next 2 helical transmembrane spans lie at Ile9 to Phe29 and Val56 to Pro76.

Its subcellular location is the membrane. This is an uncharacterized protein from Saccharomyces cerevisiae (strain ATCC 204508 / S288c) (Baker's yeast).